A 110-amino-acid polypeptide reads, in one-letter code: Nucleoid-associated protein Mkms_4993 (110 aa).

Belongs to the YbaB/EbfC family. In terms of assembly, homodimer.

The protein localises to the cytoplasm. It is found in the nucleoid. Binds to DNA and alters its conformation. May be involved in regulation of gene expression, nucleoid organization and DNA protection. This is Nucleoid-associated protein Mkms_4993 from Mycobacterium sp. (strain KMS).